The chain runs to 439 residues: ATP-dependent RNA helicase RhlB (439 aa).

A Q motif motif is present at residues 9 to 37; that stretch reads QKFADLPLHPEVKQALAENGFEFCTPIQA. In terms of domain architecture, Helicase ATP-binding spans 40 to 219; the sequence is LPVLLQSKDI…YDHMNDPVKV (180 aa). An ATP-binding site is contributed by 53–60; that stretch reads AQTGTGKT. Residues 165–168 carry the DEAD box motif; sequence DEAD. One can recognise a Helicase C-terminal domain in the interval 243–390; that stretch reads KIRLLLTLIE…VSNYDRDALL (148 aa). A disordered region spans residues 395-439; the sequence is PPVKIHRKHPAGARNLRERSGAGRPQGAHRSGGRPPRHDRTRRQP. A compositionally biased stretch (basic residues) spans 425–439; it reads SGGRPPRHDRTRRQP.

It belongs to the DEAD box helicase family. RhlB subfamily. In terms of assembly, component of the RNA degradosome, which is a multiprotein complex involved in RNA processing and mRNA degradation.

It localises to the cytoplasm. It carries out the reaction ATP + H2O = ADP + phosphate + H(+). Its function is as follows. DEAD-box RNA helicase involved in RNA degradation. Has RNA-dependent ATPase activity and unwinds double-stranded RNA. The polypeptide is ATP-dependent RNA helicase RhlB (Shewanella sp. (strain MR-4)).